The primary structure comprises 347 residues: MNPLILIMIMLTVILGTTIVMMSSHWLMIWMGFEMNMLAVIPLLMKQYNPRSMEAATKYFLTQATASMLLMLAIIINLLYSGQWTFTKLMNPTASIIMTLAMAMKMGLAPLHFWVPEVTQGISLSSGLILLTWQKLAPLSVLYVISPGINLDLILLMSMMSIAIGGWGGLNQTQLRKILAYSSIAHMGWMASILAFNPTMTLLNLLLYILMTTTTFMLFMATSATTTLSLSHMWNKMPLITSSTLTIMLSLGGLPPLVGFLPKWMIIQELTKNNNITLATLMAITALLNLFFYMRLTYATSLTMFPTMNNMKIKWQFNNKKQMKYLPMLIILSTITLPLAPAITLLN.

The next 10 helical transmembrane spans lie at 3-23 (PLIL…VMMS), 25-45 (HWLM…PLLM), 59-79 (YFLT…INLL), 96-116 (IIMT…FWVP), 148-170 (GINL…WGGL), 178-198 (ILAY…AFNP), 200-220 (MTLL…MLFM), 247-267 (IMLS…WMII), 276-296 (ITLA…YMRL), and 326-346 (LPML…ITLL).

Belongs to the complex I subunit 2 family. Core subunit of respiratory chain NADH dehydrogenase (Complex I) which is composed of 45 different subunits. Interacts with TMEM242.

It localises to the mitochondrion inner membrane. The catalysed reaction is a ubiquinone + NADH + 5 H(+)(in) = a ubiquinol + NAD(+) + 4 H(+)(out). Core subunit of the mitochondrial membrane respiratory chain NADH dehydrogenase (Complex I) which catalyzes electron transfer from NADH through the respiratory chain, using ubiquinone as an electron acceptor. Essential for the catalytic activity and assembly of complex I. This Saccopteryx leptura (Lesser sac-winged bat) protein is NADH-ubiquinone oxidoreductase chain 2.